The chain runs to 764 residues: 5-methyltetrahydropteroyltriglutamate--homocysteine methyltransferase (764 aa).

5-methyltetrahydropteroyltri-L-glutamate-binding positions include 16–19 and Lys121; that span reads RELK. Residues 440 to 442 and Glu493 contribute to the L-homocysteine site; that span reads IGS. Residues 440-442 and Glu493 each bind L-methionine; that span reads IGS. Residues 524 to 525 and Trp570 each bind 5-methyltetrahydropteroyltri-L-glutamate; that span reads RC. Residue Asp608 participates in L-homocysteine binding. Asp608 serves as a coordination point for L-methionine. Residue Glu614 participates in 5-methyltetrahydropteroyltri-L-glutamate binding. 3 residues coordinate Zn(2+): His650, Cys652, and Glu674. The active-site Proton donor is His703. Zn(2+) is bound at residue Cys735.

It belongs to the vitamin-B12 independent methionine synthase family. Requires Zn(2+) as cofactor.

It carries out the reaction 5-methyltetrahydropteroyltri-L-glutamate + L-homocysteine = tetrahydropteroyltri-L-glutamate + L-methionine. It participates in amino-acid biosynthesis; L-methionine biosynthesis via de novo pathway; L-methionine from L-homocysteine (MetE route): step 1/1. Its function is as follows. Catalyzes the transfer of a methyl group from 5-methyltetrahydrofolate to homocysteine resulting in methionine formation. The protein is 5-methyltetrahydropteroyltriglutamate--homocysteine methyltransferase of Burkholderia ambifaria (strain MC40-6).